Here is a 501-residue protein sequence, read N- to C-terminus: Cytochrome P450 3A6 (501 aa).

Cys-440 lines the heme pocket.

Belongs to the cytochrome P450 family. The cofactor is heme.

Its subcellular location is the endoplasmic reticulum membrane. The protein localises to the microsome membrane. The enzyme catalyses an organic molecule + reduced [NADPH--hemoprotein reductase] + O2 = an alcohol + oxidized [NADPH--hemoprotein reductase] + H2O + H(+). In terms of biological role, exhibits progesterone 6 beta-hydroxylase activity. The polypeptide is Cytochrome P450 3A6 (CYP3A6) (Oryctolagus cuniculus (Rabbit)).